Consider the following 266-residue polypeptide: Metallo-beta-lactamase VIM-1 (266 aa).

A signal peptide spans 1–20; sequence MLKVISSLLVYMTASVMAVA. Residues histidine 114, histidine 116, aspartate 118, histidine 179, cysteine 198, and histidine 240 each contribute to the Zn(2+) site.

Belongs to the metallo-beta-lactamase superfamily. Class-B beta-lactamase family. As to quaternary structure, monomer. It depends on Zn(2+) as a cofactor.

It localises to the periplasm. It catalyses the reaction a beta-lactam + H2O = a substituted beta-amino acid. Weakly inhibited by beta-lactamase-blocking agent sulbactam. Class B beta-lactamase which confers resistance to the beta-lactam antibiotics, including penicillins, cephalosporins and carbapenems. Acts via hydrolysis of the beta-lactam ring. Has penicillin-, cephalosporin- and carbapenem-hydrolyzing activities. The polypeptide is Metallo-beta-lactamase VIM-1 (Pseudomonas aeruginosa (strain ATCC 15692 / DSM 22644 / CIP 104116 / JCM 14847 / LMG 12228 / 1C / PRS 101 / PAO1)).